The following is a 232-amino-acid chain: Peptidoglycan-recognition protein LB (232 aa).

The N-terminal stretch at 1-15 (MTALGLVLLSMMGYS) is a signal peptide. The 127-residue stretch at 53–179 (APYVIIHHSY…RQVRDTECPG (127 aa)) folds into the N-acetylmuramoyl-L-alanine amidase domain. H59 is a Zn(2+) binding site. A disulfide bond links C67 and C73. Zn(2+)-binding residues include H169 and C177. N196 carries N-linked (GlcNAc...) asparagine glycosylation. The tract at residues 213-232 (HPQAAAPQKPHQSPPAAPKV) is disordered.

It belongs to the N-acetylmuramoyl-L-alanine amidase 2 family. In terms of assembly, monomer. Requires Zn(2+) as cofactor. As to expression, widely expressed.

It is found in the secreted. The enzyme catalyses Hydrolyzes the link between N-acetylmuramoyl residues and L-amino acid residues in certain cell-wall glycopeptides.. In terms of biological role, N-acetylmuramyl-L-alanine amidase involved in innate immunity by degrading bacterial peptidoglycans (PGN). Probably plays a scavenger role by digesting biologically active PGN into biologically inactive fragments. Has no direct bacteriolytic activity. The polypeptide is Peptidoglycan-recognition protein LB (PGRP-LB) (Drosophila melanogaster (Fruit fly)).